A 161-amino-acid chain; its full sequence is Blue copper protein 1a (161 aa).

An N-terminal signal peptide occupies residues 1-23 (MASSRVVLILSISMVLLSSVAIA). The Phytocyanin domain maps to 24-124 (TDHIVGDDKG…QMKLVITVLA (101 aa)). H64 contacts Cu cation. N70 carries N-linked (GlcNAc...) asparagine glycosylation. A disulfide bridge links C77 with C111. Residues C105, H110, and M116 each contribute to the Cu cation site. Residues 141–161 (VVSSLFGVVMAIMVAIAVIFA) traverse the membrane as a helical segment.

The protein localises to the membrane. The protein is Blue copper protein 1a of Medicago truncatula (Barrel medic).